Here is a 446-residue protein sequence, read N- to C-terminus: Methylenetetrahydrofolate--tRNA-(uracil-5-)-methyltransferase TrmFO (446 aa).

11-16 (GGGLAG) serves as a coordination point for FAD.

This sequence belongs to the MnmG family. TrmFO subfamily. It depends on FAD as a cofactor.

Its subcellular location is the cytoplasm. It catalyses the reaction uridine(54) in tRNA + (6R)-5,10-methylene-5,6,7,8-tetrahydrofolate + NADH + H(+) = 5-methyluridine(54) in tRNA + (6S)-5,6,7,8-tetrahydrofolate + NAD(+). The enzyme catalyses uridine(54) in tRNA + (6R)-5,10-methylene-5,6,7,8-tetrahydrofolate + NADPH + H(+) = 5-methyluridine(54) in tRNA + (6S)-5,6,7,8-tetrahydrofolate + NADP(+). In terms of biological role, catalyzes the folate-dependent formation of 5-methyl-uridine at position 54 (M-5-U54) in all tRNAs. This is Methylenetetrahydrofolate--tRNA-(uracil-5-)-methyltransferase TrmFO from Oleidesulfovibrio alaskensis (strain ATCC BAA-1058 / DSM 17464 / G20) (Desulfovibrio alaskensis).